A 142-amino-acid polypeptide reads, in one-letter code: Gonadotropin subunit beta-2 (142 aa).

The N-terminal stretch at 1 to 23 (MLGLHVGTLISLFLCILLEPVEG) is a signal peptide. Disulfide bonds link cysteine 29/cysteine 77, cysteine 43/cysteine 92, cysteine 46/cysteine 130, cysteine 54/cysteine 108, cysteine 58/cysteine 110, and cysteine 113/cysteine 120. N-linked (GlcNAc...) asparagine glycosylation occurs at asparagine 33.

Belongs to the glycoprotein hormones subunit beta family. In terms of assembly, heterodimer of an alpha and a beta chain.

The protein localises to the secreted. Involved in gametogenesis and steroidogenesis. The sequence is that of Gonadotropin subunit beta-2 (cgbb) from Oncorhynchus keta (Chum salmon).